We begin with the raw amino-acid sequence, 67 residues long: uncharacterized protein (67 aa).

Transmembrane regions (helical) follow at residues 8–28 and 41–61; these read MWFALGSMGLMFLAVASIYLS and ISSFAYMCMLISGIIVFVVVF.

Its subcellular location is the cell membrane. This is an uncharacterized protein from Bacillus subtilis (strain 168).